Consider the following 370-residue polypeptide: Chaperone protein DnaJ (370 aa).

The J domain maps to Asp7–Gly73. The segment at Gly144–Arg226 adopts a CR-type zinc-finger fold. 8 residues coordinate Zn(2+): Cys157, Cys160, Cys174, Cys177, Cys200, Cys203, Cys214, and Cys217. CXXCXGXG motif repeat units lie at residues Cys157 to Gly164, Cys174 to Gly181, Cys200 to Gly207, and Cys214 to Gly221.

Belongs to the DnaJ family. As to quaternary structure, homodimer. Zn(2+) is required as a cofactor.

It is found in the cytoplasm. Its function is as follows. Participates actively in the response to hyperosmotic and heat shock by preventing the aggregation of stress-denatured proteins and by disaggregating proteins, also in an autonomous, DnaK-independent fashion. Unfolded proteins bind initially to DnaJ; upon interaction with the DnaJ-bound protein, DnaK hydrolyzes its bound ATP, resulting in the formation of a stable complex. GrpE releases ADP from DnaK; ATP binding to DnaK triggers the release of the substrate protein, thus completing the reaction cycle. Several rounds of ATP-dependent interactions between DnaJ, DnaK and GrpE are required for fully efficient folding. Also involved, together with DnaK and GrpE, in the DNA replication of plasmids through activation of initiation proteins. This Thermotoga neapolitana (strain ATCC 49049 / DSM 4359 / NBRC 107923 / NS-E) protein is Chaperone protein DnaJ.